Consider the following 351-residue polypeptide: Polycomb group RING finger protein 6 (351 aa).

Residues 1-114 (MEEAETDATE…FSLRLESGRA (114 aa)) form a disordered region. Positions 9–19 (TENKRASEAKR) are enriched in basic and acidic residues. Residues 24–37 (LPPPPPPISPPALI) are compositionally biased toward pro residues. Residue Ser32 is modified to Phosphoserine. The segment covering 38–51 (PAPAAGEEGPASLA) has biased composition (low complexity). The span at 62-80 (RPPELEPERSLGRLRGRFE) shows a compositional bias: basic and acidic residues. Positions 69 to 110 (ERSLGRLRGRFEDYDEELEEDEEMEEEEEEEEEMSHFSLRLE) form a coiled coil. Positions 81–101 (DYDEELEEDEEMEEEEEEEEE) are enriched in acidic residues. The residue at position 116 (Ser116) is a Phosphoserine. An RING-type zinc finger spans residues 135–174 (CSICKGYLIDATTITECLHTFCKSCIVRHFYYSNRCPKCN). Glycyl lysine isopeptide (Lys-Gly) (interchain with G-Cter in SUMO2) cross-links involve residues Lys224 and Lys235.

Component of a PRC1-like complex. Interacts with BMI1/PCGF4, RING1 and RNF2. Interacts with KDM5D. Interacts with CBX4, CBX6, CBX7 and CBX8. Phosphorylated during mitosis.

The protein localises to the nucleus. Functionally, transcriptional repressor. May modulate the levels of histone H3K4Me3 by activating KDM5D histone demethylase. Component of a Polycomb group (PcG) multiprotein PRC1-like complex, a complex class required to maintain the transcriptionally repressive state of many genes, including Hox genes, throughout development. PcG PRC1 complex acts via chromatin remodeling and modification of histones; it mediates monoubiquitination of histone H2A 'Lys-119', rendering chromatin heritably changed in its expressibility. Within the PRC1-like complex, regulates RNF2 ubiquitin ligase activity. This Rattus norvegicus (Rat) protein is Polycomb group RING finger protein 6 (Pcgf6).